Here is a 369-residue protein sequence, read N- to C-terminus: Phenylalanine--tRNA ligase alpha subunit (369 aa).

E269 is a Mg(2+) binding site.

The protein belongs to the class-II aminoacyl-tRNA synthetase family. Phe-tRNA synthetase alpha subunit type 1 subfamily. In terms of assembly, tetramer of two alpha and two beta subunits. Requires Mg(2+) as cofactor.

The protein localises to the cytoplasm. The enzyme catalyses tRNA(Phe) + L-phenylalanine + ATP = L-phenylalanyl-tRNA(Phe) + AMP + diphosphate + H(+). The sequence is that of Phenylalanine--tRNA ligase alpha subunit from Nitrobacter winogradskyi (strain ATCC 25391 / DSM 10237 / CIP 104748 / NCIMB 11846 / Nb-255).